The primary structure comprises 649 residues: Macrolide export ATP-binding/permease protein MacB (649 aa).

The 239-residue stretch at 7–245 (IELKNIVRRY…SSAQEVTPQL (239 aa)) folds into the ABC transporter domain. 43–50 (GASGSGKS) lines the ATP pocket. Transmembrane regions (helical) follow at residues 276–296 (LLTM…IALG), 529–549 (IAFI…LVSV), 582–602 (LLGG…FSAF), and 612–632 (FSSF…FGYF).

Belongs to the ABC transporter superfamily. Macrolide exporter (TC 3.A.1.122) family. Homodimer. Part of the tripartite efflux system MacAB-TolC, which is composed of an inner membrane transporter, MacB, a periplasmic membrane fusion protein, MacA, and an outer membrane component, TolC. The complex forms a large protein conduit and can translocate molecules across both the inner and outer membranes. Interacts with MacA.

It localises to the cell inner membrane. Its function is as follows. Part of the tripartite efflux system MacAB-TolC. MacB is a non-canonical ABC transporter that contains transmembrane domains (TMD), which form a pore in the inner membrane, and an ATP-binding domain (NBD), which is responsible for energy generation. Confers resistance against macrolides. The protein is Macrolide export ATP-binding/permease protein MacB of Pasteurella multocida (strain Pm70).